A 457-amino-acid chain; its full sequence is Bifunctional protein GlmU (457 aa).

The segment at Met-1–Arg-229 is pyrophosphorylase. UDP-N-acetyl-alpha-D-glucosamine-binding positions include Leu-11–Gly-14, Lys-25, Gln-76, Gly-81–Thr-82, Tyr-103–Asp-105, Gly-140, Glu-154, Asn-169, and Asn-227. Asp-105 serves as a coordination point for Mg(2+). Residue Asn-227 participates in Mg(2+) binding. Residues Leu-230–Glu-250 form a linker region. The segment at Gly-251–Gln-457 is N-acetyltransferase. Positions 333 and 351 each coordinate UDP-N-acetyl-alpha-D-glucosamine. His-363 (proton acceptor) is an active-site residue. Tyr-366 and Asn-377 together coordinate UDP-N-acetyl-alpha-D-glucosamine. Acetyl-CoA is bound by residues Ala-380, Asn-386 to Tyr-387, Ser-405, Ala-423, and Arg-440.

This sequence in the N-terminal section; belongs to the N-acetylglucosamine-1-phosphate uridyltransferase family. It in the C-terminal section; belongs to the transferase hexapeptide repeat family. In terms of assembly, homotrimer. The cofactor is Mg(2+).

It localises to the cytoplasm. It carries out the reaction alpha-D-glucosamine 1-phosphate + acetyl-CoA = N-acetyl-alpha-D-glucosamine 1-phosphate + CoA + H(+). It catalyses the reaction N-acetyl-alpha-D-glucosamine 1-phosphate + UTP + H(+) = UDP-N-acetyl-alpha-D-glucosamine + diphosphate. It functions in the pathway nucleotide-sugar biosynthesis; UDP-N-acetyl-alpha-D-glucosamine biosynthesis; N-acetyl-alpha-D-glucosamine 1-phosphate from alpha-D-glucosamine 6-phosphate (route II): step 2/2. The protein operates within nucleotide-sugar biosynthesis; UDP-N-acetyl-alpha-D-glucosamine biosynthesis; UDP-N-acetyl-alpha-D-glucosamine from N-acetyl-alpha-D-glucosamine 1-phosphate: step 1/1. Its pathway is bacterial outer membrane biogenesis; LPS lipid A biosynthesis. Functionally, catalyzes the last two sequential reactions in the de novo biosynthetic pathway for UDP-N-acetylglucosamine (UDP-GlcNAc). The C-terminal domain catalyzes the transfer of acetyl group from acetyl coenzyme A to glucosamine-1-phosphate (GlcN-1-P) to produce N-acetylglucosamine-1-phosphate (GlcNAc-1-P), which is converted into UDP-GlcNAc by the transfer of uridine 5-monophosphate (from uridine 5-triphosphate), a reaction catalyzed by the N-terminal domain. This Proteus mirabilis (strain HI4320) protein is Bifunctional protein GlmU.